The following is a 169-amino-acid chain: Endoribonuclease YbeY (169 aa).

Residues H128, H132, and H138 each coordinate Zn(2+).

This sequence belongs to the endoribonuclease YbeY family. The cofactor is Zn(2+).

It localises to the cytoplasm. Single strand-specific metallo-endoribonuclease involved in late-stage 70S ribosome quality control and in maturation of the 3' terminus of the 16S rRNA. The chain is Endoribonuclease YbeY from Rhizorhabdus wittichii (strain DSM 6014 / CCUG 31198 / JCM 15750 / NBRC 105917 / EY 4224 / RW1) (Sphingomonas wittichii).